The sequence spans 353 residues: UDP-N-acetylglucosamine--N-acetylmuramyl-(pentapeptide) pyrophosphoryl-undecaprenol N-acetylglucosamine transferase (353 aa).

UDP-N-acetyl-alpha-D-glucosamine contacts are provided by residues 10–12 (TGG), Asn124, Ser183, and Gln283.

This sequence belongs to the glycosyltransferase 28 family. MurG subfamily.

The protein resides in the cell inner membrane. The enzyme catalyses di-trans,octa-cis-undecaprenyl diphospho-N-acetyl-alpha-D-muramoyl-L-alanyl-D-glutamyl-meso-2,6-diaminopimeloyl-D-alanyl-D-alanine + UDP-N-acetyl-alpha-D-glucosamine = di-trans,octa-cis-undecaprenyl diphospho-[N-acetyl-alpha-D-glucosaminyl-(1-&gt;4)]-N-acetyl-alpha-D-muramoyl-L-alanyl-D-glutamyl-meso-2,6-diaminopimeloyl-D-alanyl-D-alanine + UDP + H(+). Its pathway is cell wall biogenesis; peptidoglycan biosynthesis. Its function is as follows. Cell wall formation. Catalyzes the transfer of a GlcNAc subunit on undecaprenyl-pyrophosphoryl-MurNAc-pentapeptide (lipid intermediate I) to form undecaprenyl-pyrophosphoryl-MurNAc-(pentapeptide)GlcNAc (lipid intermediate II). The chain is UDP-N-acetylglucosamine--N-acetylmuramyl-(pentapeptide) pyrophosphoryl-undecaprenol N-acetylglucosamine transferase from Helicobacter pylori (strain J99 / ATCC 700824) (Campylobacter pylori J99).